The following is a 343-amino-acid chain: Mas-related G-protein coupled receptor member F (343 aa).

The Extracellular segment spans residues 1–44 (MAGNCSWEAHSTNQNKMCPGMSEARELYSRGFLTIEQIATLPPP). A glycan (N-linked (GlcNAc...) asparagine) is linked at N4. The chain crosses the membrane as a helical span at residues 45–66 (AVTNYIFLLLCLCGLVGNGLVL). Over 67–82 (WFFGFSIKRTPFSIYF) the chain is Cytoplasmic. The chain crosses the membrane as a helical span at residues 83–104 (LHLASADGMYLFSKAVIALLNM). Residues 105–123 (GTFLGSFPDYIRRVSRIVG) lie on the Extracellular side of the membrane. A helical transmembrane segment spans residues 124-144 (LCTFFTGVSLLPAISIERCVS). At 145–160 (VIFPTWYWRRRPKRLS) the chain is on the cytoplasmic side. A helical transmembrane segment spans residues 161–181 (AGVCALLWMLSFLVTSIHNYF). The Extracellular segment spans residues 182–198 (CMFLGHEAPGTVCRNMD). A helical membrane pass occupies residues 199–220 (IALGILLFFLFCPLMVLPCLAL). Over 221–241 (ILHVECRARRRQRSAKLNHVV) the chain is Cytoplasmic. A helical transmembrane segment spans residues 242 to 263 (LAIVSVFLVSSIYLGIDWFLFW). Over 264–273 (VFQIPAPFPE) the chain is Extracellular. The chain crosses the membrane as a helical span at residues 274-294 (YVTDLCICINSSAKPIVYFLA). The Cytoplasmic portion of the chain corresponds to 295 to 343 (GRDKSQRLWEPLRVVFQRALRDGAEPGDAASSTPNTVTMEMQCPSGNAS). The interval 318-343 (AEPGDAASSTPNTVTMEMQCPSGNAS) is disordered. Polar residues predominate over residues 324 to 343 (ASSTPNTVTMEMQCPSGNAS).

Belongs to the G-protein coupled receptor 1 family. Mas subfamily.

Its subcellular location is the cell membrane. Orphan receptor. May bind to a neuropeptide and may regulate nociceptor function and/or development, including the sensation or modulation of pain. In Mus musculus (Mouse), this protein is Mas-related G-protein coupled receptor member F (Mrgprf).